A 149-amino-acid polypeptide reads, in one-letter code: Transcriptional repressor NrdR (149 aa).

The segment at 3-34 is a zinc-finger region; that stretch reads CPFCFAVDTKVIDSRLVGEGSSVRRRRQCLVC. Residues 49-139 form the ATP-cone domain; it reads PRVVKSNDVR…VYRSFEDIRE (91 aa).

The protein belongs to the NrdR family. Requires Zn(2+) as cofactor.

Its function is as follows. Negatively regulates transcription of bacterial ribonucleotide reductase nrd genes and operons by binding to NrdR-boxes. The chain is Transcriptional repressor NrdR from Cronobacter sakazakii (strain ATCC BAA-894) (Enterobacter sakazakii).